Here is a 357-residue protein sequence, read N- to C-terminus: Putative electron transport protein YccM (357 aa).

The Cytoplasmic segment spans residues 1–36 (MAENKRTRWQRRPGTTGGKLPWNDWRNATTWRKATQ). The helical transmembrane segment at 37–54 (LLLLAMNIYIAITFWYWV) threads the bilayer. Residues 55-91 (RYYETASSTTFVARPGGIEGWLPIAGLMNLKYSLVTG) lie on the Periplasmic side of the membrane. The helical transmembrane segment at 92 to 114 (QLPSVHAAAMLLLVAFIVISLLL) threads the bilayer. Topologically, residues 115–158 (KKAFCSWLCPVGTLSELIGDLGNKLFGRQCVLPRWLDIPLRGVK) are cytoplasmic. Residues 159–181 (YLLLSFFIYIALLMPAQAIHYFM) traverse the membrane as a helical segment. Topologically, residues 182 to 195 (LSPYSVVMDVKMLD) are periplasmic. The helical transmembrane segment at 196–218 (FFRHMGTATLISVTVLLIASLFI) threads the bilayer. The Cytoplasmic segment spans residues 219–309 (RHAWCRYLCP…KPAANKKAFA (91 aa)). 4Fe-4S ferredoxin-type domains lie at 242–270 (FKIR…VDKL) and 269–299 (KLIQ…FSLQ). Residues Cys251, Cys254, Cys257, Cys261, Cys278, Cys281, Cys284, and Cys288 each coordinate [4Fe-4S] cluster. A helical transmembrane segment spans residues 310-332 (LSGWLMTLLVLGIMFAVIGYAMY). Over 333–357 (AGVWQSPVPEELYRRLIPQAPMIGH) the chain is Periplasmic.

Its subcellular location is the cell inner membrane. This chain is Putative electron transport protein YccM (yccM), found in Escherichia coli (strain K12).